We begin with the raw amino-acid sequence, 400 residues long: Acetate kinase (400 aa).

Asn-7 serves as a coordination point for Mg(2+). An ATP-binding site is contributed by Lys-14. Substrate is bound at residue Arg-85. Asp-142 functions as the Proton donor/acceptor in the catalytic mechanism. Residues 202–206 (HLGNG), 278–280 (DMR), and 326–330 (GIGEN) each bind ATP. Glu-380 provides a ligand contact to Mg(2+).

Belongs to the acetokinase family. In terms of assembly, homodimer. Mg(2+) serves as cofactor. Requires Mn(2+) as cofactor.

The protein resides in the cytoplasm. The enzyme catalyses acetate + ATP = acetyl phosphate + ADP. It functions in the pathway metabolic intermediate biosynthesis; acetyl-CoA biosynthesis; acetyl-CoA from acetate: step 1/2. Its function is as follows. Catalyzes the formation of acetyl phosphate from acetate and ATP. Can also catalyze the reverse reaction. This is Acetate kinase from Deinococcus deserti (strain DSM 17065 / CIP 109153 / LMG 22923 / VCD115).